Reading from the N-terminus, the 178-residue chain is MSRIGKQPVKLASGLEAKLEGNKLIIKKGQDEKVIDTKGVVKVNINGDELTFEPVEETKFAKAMWGTVRALANNAVIGLTQGFEKKLEINGVGYRAQVKGNILELQLGYSHPINFEIPKGITITVEKNIITVKGSDKQQVGQVASEIRSFRKPEPYKGKGVKYVDEHIIRKAGKTAKK.

This sequence belongs to the universal ribosomal protein uL6 family. In terms of assembly, part of the 50S ribosomal subunit.

In terms of biological role, this protein binds to the 23S rRNA, and is important in its secondary structure. It is located near the subunit interface in the base of the L7/L12 stalk, and near the tRNA binding site of the peptidyltransferase center. This chain is Large ribosomal subunit protein uL6, found in Nautilia profundicola (strain ATCC BAA-1463 / DSM 18972 / AmH).